The sequence spans 327 residues: Phenylalanine--tRNA ligase alpha subunit (327 aa).

Glutamate 252 serves as a coordination point for Mg(2+).

The protein belongs to the class-II aminoacyl-tRNA synthetase family. Phe-tRNA synthetase alpha subunit type 1 subfamily. As to quaternary structure, tetramer of two alpha and two beta subunits. Mg(2+) serves as cofactor.

The protein localises to the cytoplasm. The catalysed reaction is tRNA(Phe) + L-phenylalanine + ATP = L-phenylalanyl-tRNA(Phe) + AMP + diphosphate + H(+). This chain is Phenylalanine--tRNA ligase alpha subunit, found in Shewanella sp. (strain MR-7).